We begin with the raw amino-acid sequence, 286 residues long: Putative L-ribulose-5-phosphate 3-epimerase SgbU (286 aa).

It belongs to the L-ribulose-5-phosphate 3-epimerase family.

It catalyses the reaction L-ribulose 5-phosphate = L-xylulose 5-phosphate. Functionally, catalyzes the isomerization of L-xylulose-5-phosphate to L-ribulose-5-phosphate (Potential). May be involved in the utilization of 2,3-diketo-L-gulonate. This is Putative L-ribulose-5-phosphate 3-epimerase SgbU (sgbU) from Escherichia coli (strain K12).